A 316-amino-acid polypeptide reads, in one-letter code: Endochitinase 2 (316 aa).

Residues 1-18 (EFTTLFLLFSVLLLSASA) form the signal peptide. The Chitin-binding type-1 domain occupies 19 to 60 (EQCGSQAGGALCASGLCCSKFGWCGNTNDYCGPGNCQSQCPG). Cystine bridges form between Cys-21-Cys-36, Cys-30-Cys-42, Cys-35-Cys-49, Cys-54-Cys-58, Cys-87-Cys-150, Cys-162-Cys-170, and Cys-269-Cys-301. Glu-132 serves as the catalytic Proton donor. The propeptide at 310–316 (GLLVDTV) is removed in mature form, vacuolar targeting.

This sequence belongs to the glycosyl hydrolase 19 family. Chitinase class I subfamily.

It localises to the vacuole. The catalysed reaction is Random endo-hydrolysis of N-acetyl-beta-D-glucosaminide (1-&gt;4)-beta-linkages in chitin and chitodextrins.. Defense against chitin-containing fungal pathogens. The protein is Endochitinase 2 (CHTB2) of Solanum tuberosum (Potato).